The following is a 405-amino-acid chain: Obg-like ATPase homolog (405 aa).

The OBG-type G domain maps to P17–D283. Residues N26–T31 and V231 each bind ATP. The TGS domain occupies N312 to A398.

Belongs to the TRAFAC class OBG-HflX-like GTPase superfamily. OBG GTPase family.

Its subcellular location is the mitochondrion. Hydrolyzes ATP, and can also hydrolyze GTP with lower efficiency. Has lower affinity for GTP. The sequence is that of Obg-like ATPase homolog (YLF2) from Saccharomyces cerevisiae (strain ATCC 204508 / S288c) (Baker's yeast).